Reading from the N-terminus, the 465-residue chain is MLLLWALPLLLGAVAGLEVCYERLGCFGNRIPWSGGTLERPFSTLPSTPKIVNTRFLLYTNENPNNFQEISADASTIRGSNFRTDRKTRFIIHGFTDKGEENWLSNLCENLFQVETVNCICVDWKGGSRTTYPQATQNIRIVGAEVAYLVGTLQSSLGYSPSNIHVIGHSLGAHAAGEVGRRTNGTIGRITGLDPAEPYFQGTPEIVRLDPSDAQFVDVIHTDAAPMVPNLGFGMSQTVGHLDFFPNGGKEMPGCQKNVLSQIVDINGVWEGTRDFVACNHLRSYKYYADSIVNPNGFAGFSCASYTAFSANKCFPCSNGCPQMGHYADRFSRKTDGVGQTFYLNTGDSSNFARWRYQVAVTLSGRRVTGHVLVSLYGSKGNSKQYEIFTGLLKPGDTHLNEFDSDVDVGDVQKVKFVWYNNVINPTLPKVGASQITVEQNDGRVFKFCSTDTVREDILLTLTPC.

A signal peptide spans 1–16; sequence MLLLWALPLLLGAVAG. 2 disulfide bridges follow: cysteine 20/cysteine 26 and cysteine 108/cysteine 119. Serine 170 (nucleophile) is an active-site residue. Aspartate 194 functions as the Charge relay system in the catalytic mechanism. Residues glutamate 205, arginine 208, aspartate 210, and aspartate 213 each contribute to the Ca(2+) site. Residues cysteine 255 and cysteine 279 are joined by a disulfide bond. The Charge relay system role is filled by histidine 281. Cystine bridges form between cysteine 303/cysteine 314, cysteine 317/cysteine 321, and cysteine 449/cysteine 465. Positions 355–465 constitute a PLAT domain; the sequence is WRYQVAVTLS…EDILLTLTPC (111 aa).

The protein belongs to the AB hydrolase superfamily. Lipase family. In terms of assembly, forms a 1:1 stoichiometric complex with (pro)colipase/CLPS.

The protein localises to the secreted. It catalyses the reaction a triacylglycerol + H2O = a diacylglycerol + a fatty acid + H(+). The enzyme catalyses 1,2,3-tributanoylglycerol + H2O = dibutanoylglycerol + butanoate + H(+). It carries out the reaction 1,2,3-tri-(9Z-octadecenoyl)-glycerol + H2O = di-(9Z)-octadecenoylglycerol + (9Z)-octadecenoate + H(+). The catalysed reaction is all-trans-retinyl hexadecanoate + H2O = all-trans-retinol + hexadecanoate + H(+). It catalyses the reaction 1,2-di-(9Z-octadecenoyl)-glycerol + H2O = (9Z-octadecenoyl)-glycerol + (9Z)-octadecenoate + H(+). With respect to regulation, inhibited by bile salts, is reactivated by (pro)colipase/CLPS. Plays an important role in fat metabolism. It preferentially splits the esters of long-chain fatty acids at positions 1 and 3, producing mainly 2-monoacylglycerol and free fatty acids, and shows considerably higher activity against insoluble emulsified substrates than against soluble ones. The polypeptide is Pancreatic triacylglycerol lipase (PNLIP) (Oryctolagus cuniculus (Rabbit)).